Consider the following 96-residue polypeptide: Small ribosomal subunit protein bS20 (96 aa).

Belongs to the bacterial ribosomal protein bS20 family.

In terms of biological role, binds directly to 16S ribosomal RNA. This chain is Small ribosomal subunit protein bS20, found in Anaplasma marginale (strain St. Maries).